A 283-amino-acid chain; its full sequence is Elongation factor Ts (283 aa).

The segment at 80–83 (TDFV) is involved in Mg(2+) ion dislocation from EF-Tu.

It belongs to the EF-Ts family.

It localises to the cytoplasm. In terms of biological role, associates with the EF-Tu.GDP complex and induces the exchange of GDP to GTP. It remains bound to the aminoacyl-tRNA.EF-Tu.GTP complex up to the GTP hydrolysis stage on the ribosome. This Haemophilus influenzae (strain 86-028NP) protein is Elongation factor Ts.